A 342-amino-acid chain; its full sequence is Serine/threonine-protein kinase SAPK1 (342 aa).

Residues 4–260 (YEVMRDIGSG…IPEIKNHPWF (257 aa)) enclose the Protein kinase domain. Residues 10 to 18 (IGSGNFGVA) and lysine 33 each bind ATP. Aspartate 123 functions as the Proton acceptor in the catalytic mechanism. The interval 253-342 (EIKNHPWFLK…ENSGDFVCAL (90 aa)) is C-terminal.

This sequence belongs to the protein kinase superfamily. Ser/Thr protein kinase family. Post-translationally, phosphorylated. In terms of tissue distribution, expressed in leaf blades, leaf sheaths and roots. Expressed in shoots and roots of young seedlings.

It carries out the reaction L-seryl-[protein] + ATP = O-phospho-L-seryl-[protein] + ADP + H(+). The enzyme catalyses L-threonyl-[protein] + ATP = O-phospho-L-threonyl-[protein] + ADP + H(+). Activated by phosphorylation in response to hyperosmotic stress within 5 minutes. May play a role in signal transduction of hyperosmotic response. This chain is Serine/threonine-protein kinase SAPK1 (SAPK1), found in Oryza sativa subsp. japonica (Rice).